We begin with the raw amino-acid sequence, 208 residues long: Thymidylate kinase (208 aa).

Position 12–19 (12–19) interacts with ATP; it reads GVDGAGKS.

Belongs to the thymidylate kinase family.

The enzyme catalyses dTMP + ATP = dTDP + ADP. Phosphorylation of dTMP to form dTDP in both de novo and salvage pathways of dTTP synthesis. The polypeptide is Thymidylate kinase (Bordetella bronchiseptica (strain ATCC BAA-588 / NCTC 13252 / RB50) (Alcaligenes bronchisepticus)).